The following is a 346-amino-acid chain: N(4)-(beta-N-acetylglucosaminyl)-L-asparaginase (346 aa).

An N-terminal signal peptide occupies residues 1–23 (MERKSNLSLLLLLLVLGMPLVRG). Residue Asn38 is glycosylated (N-linked (GlcNAc...) asparagine). 2 disulfide bridges follow: Cys64–Cys69 and Cys163–Cys179. The Nucleophile role is filled by Thr206. Substrate contacts are provided by residues 234 to 237 (RVGD) and 257 to 260 (TGDG). A disulfide bridge connects residues Cys286 and Cys306. A glycan (N-linked (GlcNAc...) asparagine) is linked at Asn310. A disulfide bridge connects residues Cys317 and Cys345.

This sequence belongs to the Ntn-hydrolase family. In terms of assembly, heterotetramer of two alpha and two beta chains arranged as a dimer of alpha/beta heterodimers. Cleaved into an alpha and beta chain by autocatalysis; this activates the enzyme. The N-terminal residue of the beta subunit is responsible for the nucleophile hydrolase activity. In terms of processing, N-glycosylated.

It is found in the lysosome. The enzyme catalyses N(4)-(beta-N-acetyl-D-glucosaminyl)-L-asparagine + H2O = N-acetyl-beta-D-glucosaminylamine + L-aspartate + H(+). Functionally, cleaves the GlcNAc-Asn bond which joins oligosaccharides to the peptide of asparagine-linked glycoproteins. In Mus musculus (Mouse), this protein is N(4)-(beta-N-acetylglucosaminyl)-L-asparaginase (Aga).